Consider the following 153-residue polypeptide: Transcriptional repressor NrdR 2 (153 aa).

A zinc finger lies at 3–34 (CPFCGQDDTQVKDSRPTDDNAAIRRRRACPGC). The ATP-cone domain occupies 49 to 139 (LVVVKKDGSR…VYRNFREAKD (91 aa)).

This sequence belongs to the NrdR family. Requires Zn(2+) as cofactor.

Negatively regulates transcription of bacterial ribonucleotide reductase nrd genes and operons by binding to NrdR-boxes. This Paramagnetospirillum magneticum (strain ATCC 700264 / AMB-1) (Magnetospirillum magneticum) protein is Transcriptional repressor NrdR 2.